The sequence spans 760 residues: Formate acetyltransferase 1 (760 aa).

Residues 3-625 (ELNEKLATAW…KTGNTPDGRR (623 aa)) form the PFL domain. Lys63 bears the N6-acetyllysine; alternate mark. Lys63 carries the N6-succinyllysine; alternate modification. Position 107 is an N6-succinyllysine (Lys107). Position 117 is an N6-acetyllysine; alternate (Lys117). Lys117 is subject to N6-succinyllysine; alternate. Residue Lys124 is modified to N6-succinyllysine. Lys195 carries the post-translational modification N6-acetyllysine; alternate. The residue at position 195 (Lys195) is an N6-succinyllysine; alternate. The S-acetylcysteine intermediate role is filled by Cys419. The active-site Cysteine radical intermediate is the Cys420. Lys454 bears the N6-acetyllysine; alternate mark. An N6-succinyllysine; alternate modification is found at Lys454. Lys467 is subject to N6-succinyllysine. N6-acetyllysine is present on residues Lys541 and Lys591. In terms of domain architecture, Glycine radical spans 632 to 760 (PGANPMHGRD…VITRTFTQSM (129 aa)). At Lys654 the chain carries N6-succinyllysine. The residue at position 735 (Gly735) is a Glycine radical.

Belongs to the glycyl radical enzyme (GRE) family. PFL subfamily. As to quaternary structure, homodimer. Interacts specifically with FocA.

It localises to the cytoplasm. The catalysed reaction is formate + acetyl-CoA = pyruvate + CoA. It functions in the pathway fermentation; pyruvate fermentation; formate from pyruvate: step 1/1. In terms of biological role, catalyzes the conversion of pyruvate to formate and acetyl-CoA. In addition, may be involved in the control of the activity of the formate channel FocA, via direct interaction with FocA. This chain is Formate acetyltransferase 1 (pflB), found in Escherichia coli (strain K12).